Reading from the N-terminus, the 326-residue chain is Ribonuclease H2 subunit A (326 aa).

Residues 1 to 47 form a disordered region; it reads MKDDHDAWEPEELVSDNNSSENELQEDQNSSITFLPPSVNKSNPAKS. Positions 15 to 47 are enriched in polar residues; the sequence is SDNNSSENELQEDQNSSITFLPPSVNKSNPAKS. The region spanning 63–286 is the RNase H type-2 domain; it reads PYRLGVDEAG…AKDLLELPSK (224 aa). Asp69, Glu70, and Asp180 together coordinate a divalent metal cation.

The protein belongs to the RNase HII family. Eukaryotic subfamily. It depends on Mn(2+) as a cofactor. Mg(2+) serves as cofactor.

It catalyses the reaction Endonucleolytic cleavage to 5'-phosphomonoester.. Its function is as follows. Endonuclease that specifically degrades the RNA of RNA-DNA hybrids. Participates in DNA replication. The polypeptide is Ribonuclease H2 subunit A (rnh201) (Schizosaccharomyces pombe (strain 972 / ATCC 24843) (Fission yeast)).